The following is a 420-amino-acid chain: Pectate lyase (420 aa).

Residues 1–21 (MKKVMLATALFLGLTPAGANA) form the signal peptide. The interval 117-139 (TWGKKEPSGTQEEARARSQKNQK) is disordered. Residues 119–132 (GKKEPSGTQEEARA) are compositionally biased toward basic and acidic residues. 3 residues coordinate Ca(2+): aspartate 205, aspartate 244, and aspartate 248. Arginine 300 is an active-site residue.

It belongs to the polysaccharide lyase 1 family. In terms of assembly, monomer. Requires Ca(2+) as cofactor.

Its subcellular location is the secreted. It catalyses the reaction Eliminative cleavage of (1-&gt;4)-alpha-D-galacturonan to give oligosaccharides with 4-deoxy-alpha-D-galact-4-enuronosyl groups at their non-reducing ends.. The protein operates within glycan metabolism; pectin degradation; 2-dehydro-3-deoxy-D-gluconate from pectin: step 2/5. Its function is as follows. Produces unsaturated products from polygalacturonate. This chain is Pectate lyase (pel), found in Bacillus subtilis (strain 168).